Here is a 260-residue protein sequence, read N- to C-terminus: Mantle protein (260 aa).

The first 16 residues, 1-16 (MLAVLLFAALVATAYS), serve as a signal peptide directing secretion.

As to expression, prismatic layer of shell (at protein level). Expressed primarily in the mantle with highest level in the mantle edge and lower level in the mantle pallium.

It localises to the secreted. This chain is Mantle protein, found in Pinctada maxima (Silver-lipped pearl oyster).